Here is a 116-residue protein sequence, read N- to C-terminus: Protein Rev (116 aa).

2 positions are modified to phosphoserine; by host CK2: Ser-5 and Ser-8. The interval Ile-18 to Asn-26 is homomultimerization. The tract at residues Gln-24–Gln-49 is disordered. The Nuclear localization signal and RNA-binding (RRE) signature appears at Thr-34–Arg-50. Residues Gln-36–Glu-47 show a composition bias toward basic residues. A Nuclear export signal and binding to XPO1 motif is present at residues Leu-73–Asp-84. Residues Ser-92 and Ser-99 each carry the phosphoserine; by host modification.

It belongs to the HIV-1 REV protein family. Homomultimer; when bound to the RRE. Multimeric assembly is essential for activity and may involve XPO1. Binds to human KPNB1, XPO1, TNPO1, RANBP5 and IPO7. Interacts with the viral Integrase. Interacts with human KHDRBS1. Interacts with human NAP1; this interaction decreases Rev multimerization and stimulates its activity. Interacts with human DEAD-box helicases DDX3 and DDX24; these interactions may serve for viral RNA export to the cytoplasm and packaging, respectively. Interacts with human PSIP1; this interaction may inhibit HIV-1 DNA integration by promoting dissociation of the Integrase-LEDGF/p75 complex. Post-translationally, asymmetrically arginine dimethylated at one site by host PRMT6. Methylation impairs the RNA-binding activity and export of viral RNA from the nucleus to the cytoplasm. Phosphorylated by protein kinase CK2. Presence of, and maybe binding to the N-terminus of the regulatory beta subunit of CK2 is necessary for CK2-mediated Rev's phosphorylation.

It is found in the host nucleus. The protein localises to the host nucleolus. Its subcellular location is the host cytoplasm. Escorts unspliced or incompletely spliced viral pre-mRNAs (late transcripts) out of the nucleus of infected cells. These pre-mRNAs carry a recognition sequence called Rev responsive element (RRE) located in the env gene, that is not present in fully spliced viral mRNAs (early transcripts). This function is essential since most viral proteins are translated from unspliced or partially spliced pre-mRNAs which cannot exit the nucleus by the pathway used by fully processed cellular mRNAs. Rev itself is translated from a fully spliced mRNA that readily exits the nucleus. Rev's nuclear localization signal (NLS) binds directly to KPNB1/Importin beta-1 without previous binding to KPNA1/Importin alpha-1. KPNB1 binds to the GDP bound form of RAN (Ran-GDP) and targets Rev to the nucleus. In the nucleus, the conversion from Ran-GDP to Ran-GTP dissociates Rev from KPNB1 and allows Rev's binding to the RRE in viral pre-mRNAs. Rev multimerization on the RRE via cooperative assembly exposes its nuclear export signal (NES) to the surface. Rev can then form a complex with XPO1/CRM1 and Ran-GTP, leading to nuclear export of the complex. Conversion from Ran-GTP to Ran-GDP mediates dissociation of the Rev/RRE/XPO1/RAN complex, so that Rev can return to the nucleus for a subsequent round of export. Beside KPNB1, also seems to interact with TNPO1/Transportin-1, RANBP5/IPO5 and IPO7/RANBP7 for nuclear import. The nucleoporin-like HRB/RIP is an essential cofactor that probably indirectly interacts with Rev to release HIV RNAs from the perinuclear region to the cytoplasm. The chain is Protein Rev from Human immunodeficiency virus type 1 group M subtype B (isolate SF33) (HIV-1).